The chain runs to 276 residues: 4-hydroxy-3-methylbut-2-enyl diphosphate reductase (276 aa).

[4Fe-4S] cluster is bound at residue Cys-12. (2E)-4-hydroxy-3-methylbut-2-enyl diphosphate contacts are provided by His-36 and His-71. Residues His-36 and His-71 each coordinate dimethylallyl diphosphate. 2 residues coordinate isopentenyl diphosphate: His-36 and His-71. Residue Cys-93 participates in [4Fe-4S] cluster binding. His-121 serves as a coordination point for (2E)-4-hydroxy-3-methylbut-2-enyl diphosphate. A dimethylallyl diphosphate-binding site is contributed by His-121. Residue His-121 participates in isopentenyl diphosphate binding. Glu-123 acts as the Proton donor in catalysis. Residue Thr-160 participates in (2E)-4-hydroxy-3-methylbut-2-enyl diphosphate binding. Residue Cys-188 coordinates [4Fe-4S] cluster. Residues Ser-216, Ser-217, Asn-218, and Ser-259 each coordinate (2E)-4-hydroxy-3-methylbut-2-enyl diphosphate. The dimethylallyl diphosphate site is built by Ser-216, Ser-217, Asn-218, and Ser-259. Residues Ser-216, Ser-217, Asn-218, and Ser-259 each contribute to the isopentenyl diphosphate site.

It belongs to the IspH family. Requires [4Fe-4S] cluster as cofactor.

It catalyses the reaction isopentenyl diphosphate + 2 oxidized [2Fe-2S]-[ferredoxin] + H2O = (2E)-4-hydroxy-3-methylbut-2-enyl diphosphate + 2 reduced [2Fe-2S]-[ferredoxin] + 2 H(+). The enzyme catalyses dimethylallyl diphosphate + 2 oxidized [2Fe-2S]-[ferredoxin] + H2O = (2E)-4-hydroxy-3-methylbut-2-enyl diphosphate + 2 reduced [2Fe-2S]-[ferredoxin] + 2 H(+). It participates in isoprenoid biosynthesis; dimethylallyl diphosphate biosynthesis; dimethylallyl diphosphate from (2E)-4-hydroxy-3-methylbutenyl diphosphate: step 1/1. The protein operates within isoprenoid biosynthesis; isopentenyl diphosphate biosynthesis via DXP pathway; isopentenyl diphosphate from 1-deoxy-D-xylulose 5-phosphate: step 6/6. In terms of biological role, catalyzes the conversion of 1-hydroxy-2-methyl-2-(E)-butenyl 4-diphosphate (HMBPP) into a mixture of isopentenyl diphosphate (IPP) and dimethylallyl diphosphate (DMAPP). Acts in the terminal step of the DOXP/MEP pathway for isoprenoid precursor biosynthesis. The chain is 4-hydroxy-3-methylbut-2-enyl diphosphate reductase from Nautilia profundicola (strain ATCC BAA-1463 / DSM 18972 / AmH).